The chain runs to 131 residues: Tegument protein ORF52 (131 aa).

A disordered region spans residues 103-131; that stretch reads SDGGTAKPPPGANNRRRRGASTTRAGVDD. Over residues 122–131 the composition is skewed to low complexity; it reads ASTTRAGVDD. Serine 123 bears the Phosphoserine; by host mark.

This sequence belongs to the herpesviridae BLRF2 family. As to quaternary structure, homooligomer; homooligomerizes and binds double-stranded DNA (dsDNA) cooperatively. Interacts with host CGAS. Interacts with PQBP1.

The protein resides in the host cytoplasm. It localises to the virion tegument. Plays a role in the inhibition of host innate immune system by targeting the CGAS enzymatic activity which is the principal cytosolic DNA sensor that detects invading viral DNA. Acts by inhibiting CGAS-DNA phase separation: directly binds double-stranded DNA (dsDNA) in a length dependent but sequence independent manner and is able to form DNA-induced phase separation in infected cells. DNA phase separation of ORF52 mediates disruption of liquid-like droplets in which CGAS is activated, thereby preventing CGAS activity. Targets also the HDP-RNP complex composed of DNA-PK subunits and paraspeckle proteins. This complex is a key nuclear regulator of DNA-mediated activation of innate immune response through the cGAS-STING pathway. This chain is Tegument protein ORF52, found in Homo sapiens (Human).